The sequence spans 458 residues: UDP-glycosyltransferase 76G1 (458 aa).

The active-site Proton acceptor is the His25. Rebaudioside A is bound at residue His25. A rubusoside-binding site is contributed by His25. Position 27 (Asn27) interacts with UDP. Asp124 acts as the Charge relay in catalysis. Residues Thr146–Ser147 and His155 each bind rebaudioside A. Residues Ser283, Trp338–Val339, and His356–Glu364 contribute to the UDP site. Rebaudioside A contacts are provided by residues Trp359 and Asp380–Gln381.

This sequence belongs to the UDP-glycosyltransferase family. As to quaternary structure, monomer.

The enzyme catalyses steviolbioside + UDP-alpha-D-glucose = rebaudioside B + UDP + H(+). It catalyses the reaction stevioside + UDP-alpha-D-glucose = rebaudioside A + UDP + H(+). The catalysed reaction is rebaudioside E + UDP-alpha-D-glucose = rebaudioside D + UDP + H(+). It carries out the reaction rebaudioside D + UDP-alpha-D-glucose = rebaudioside M + UDP + H(+). Its function is as follows. Involved in the biosynthesis of steviol glycosides in leaves. Converts the di-glycoside steviolbioside to the tri-glycoside rebaudioside B. Converts the tri-glycoside stevioside to the tetra-glycoside rebaudioside A. Converts the tetra-glycoside rebaudioside E to the penta-glycoside rebaudioside D. Converts the penta-glycoside rebaudioside D to the hexa-glycoside rebaudioside M. Can glucosylate rubusoside and rebaudioside A in vitro. The chain is UDP-glycosyltransferase 76G1 from Stevia rebaudiana (Stevia).